We begin with the raw amino-acid sequence, 1050 residues long: Toll-like receptor 7 (1050 aa).

The signal sequence occupies residues 1–26 (MVFSMWTRKRQILIFLNMLLVSRVFG). Residues 27 to 837 (FRWFPKTLPC…SLDLYTCELD (811 aa)) lie on the Extracellular side of the membrane. LRR repeat units lie at residues 42–64 (IPEAHVIVDCTDKHLTEIPEGIP), 65–87 (TNTTNLTLTINHIPSISPDSFRR), 89–111 (NHLEEIDLRCNCVPVLLGSKANV), 126–149 (LSDLKALYLDGNQLLEIPQDLPSS), 151–170 (HLLSLEANNIFSITKENLTE), 171–195 (LVNIETLYLGQNCYYRNPCNVSYSI), 203–226 (MRNLKVLSLKDNNVTAVPTTLPPN), 228–247 (LELYLYNNIIKKIQENDFNN), 248–273 (LNELQVLDLSGNCPRCYNVPYPCTPC), 275–289 (NNSPLQIHDNAFNSL), 290–312 (TELKVLRLHSNSLQHVPPTWFKN), 314–337 (RNLQELDLSQNYLAREIEEAKFLH), 339–364 (LPNLVELDFSFNYELQVYHASITLPH), 369–392 (LENLKILRVKGYVFKELKNSSLSV), 396–419 (LPRLEVLDLGTNFIKIADLNIFKH), 421–443 (ENLKLIDLSVNKISPSEESREVG), 493–516 (HIYGQTLDLSRNNIFFIKPSDFQH), 517–542 (LSFLKCLNLSGNTIGQTLNGSELWPL), 543–565 (RELRYLDFSNNRLDLLYSTAFEE), and 567–589 (QSLEVLDLSSNSHYFQAEGITHM). N-linked (GlcNAc...) asparagine glycans are attached at residues N66 and N69. N-linked (GlcNAc...) asparagine glycans are attached at residues N167, N190, and N215. N-linked (GlcNAc...) asparagine glycosylation occurs at N387. N-linked (GlcNAc...) asparagine glycosylation is found at N524 and N535. N591 carries an N-linked (GlcNAc...) asparagine glycan. 8 LRR repeats span residues 596–619 (LRLLDKLMMNDNDISTSASRTMES), 620–645 (DSLRILEFRGNHLDVLWRAGDNRYLD), 650–673 (LFNLEVLDISRNSLNSLPPEVFEG), 675–698 (PPNLKNLSLAKNGLKSFFWDRLQL), 699–722 (LKHLEILDLSHNQLTKVPERLANC), 724–746 (KSLTTLILKHNQIRQLTKYFLED), 747–770 (ALQLRYLDISSNKIQVIQKTSFPE), and 773–796 (LNNLEMLVLHHNRFLCNCDAVWFV). N-linked (GlcNAc...) asparagine glycosylation is found at N680 and N721. N800 carries an N-linked (GlcNAc...) asparagine glycan. A helical transmembrane segment spans residues 838–858 (LTNLILFSVSISSVLFLMVVM). Residues 859 to 1050 (TTSHLFFWDM…AYSQMFKETV (192 aa)) lie on the Cytoplasmic side of the membrane. The TIR domain occupies 890 to 1034 (SCYDAFIVYD…YFWQCLKNAL (145 aa)).

Belongs to the Toll-like receptor family. Homodimer. Interacts with MYD88 via their respective TIR domains. Interacts with UNC93B1. Interacts with SMPDL3B. The first cleavage is performed by asparagine endopeptidase or cathepsin family members. This initial cleavage event is followed by a trimming event that is solely cathepsin mediated and required for optimal receptor signaling.

It is found in the endosome membrane. The protein localises to the endoplasmic reticulum membrane. It localises to the lysosome. Its subcellular location is the cytoplasmic vesicle. The protein resides in the phagosome. With respect to regulation, activated by guanosine analogs including deoxyguanosine, 7-thia-8-oxoguanosine or 7-deazaguanosine in a RNA-independent manner. In terms of biological role, endosomal receptor that plays a key role in innate and adaptive immunity. Controls host immune response against pathogens through recognition of uridine-containing single strand RNAs (ssRNAs) of viral origin or guanosine analogs. Upon binding to agonists, undergoes dimerization that brings TIR domains from the two molecules into direct contact, leading to the recruitment of TIR-containing downstream adapter MYD88 through homotypic interaction. In turn, the Myddosome signaling complex is formed involving IRAK4, IRAK1, TRAF6, TRAF3 leading to activation of downstream transcription factors NF-kappa-B and IRF7 to induce pro-inflammatory cytokines and interferons, respectively. In plasmacytoid dendritic cells, RNASET2 endonuclease cooperates with PLD3 or PLD4 5'-&gt;3' exonucleases to process RNA and release 2',3'-cyclic guanosine monophosphate (2',3'-cGMP) and cytidine-rich RNA fragments that occupy TLR7 ligand-binding pockets and trigger a signaling-competent state. In Mus musculus (Mouse), this protein is Toll-like receptor 7 (Tlr7).